We begin with the raw amino-acid sequence, 186 residues long: Large ribosomal subunit protein bL12c (186 aa).

Residues 1-11 are compositionally biased toward polar residues; sequence MASTLSTITLR. Disordered stretches follow at residues 1 to 23 and 162 to 186; these read MAST…STHA and EGVS…VSIA. The transit peptide at 1 to 53 directs the protein to the chloroplast; sequence MASTLSTITLRSPSPSTASSTHASIPFPKKALEFPIRTPKLHHRRATFLRPLA. Positions 12-23 are enriched in low complexity; that stretch reads SPSPSTASSTHA. Basic and acidic residues predominate over residues 162 to 180; it reads EGVSKDEAEDAKKQLEEAG.

This sequence belongs to the bacterial ribosomal protein bL12 family.

Its subcellular location is the plastid. The protein localises to the chloroplast. The chain is Large ribosomal subunit protein bL12c (RPL12) from Nicotiana tabacum (Common tobacco).